The chain runs to 179 residues: Stress response regulator gls24 homolog (179 aa).

Positions 147-179 (TSEFTSHQVENVKASVDNGVEKLQDQKAEPRVK) are disordered. Residues 165–179 (GVEKLQDQKAEPRVK) are compositionally biased toward basic and acidic residues.

This sequence belongs to the asp23 family.

The chain is Stress response regulator gls24 homolog from Streptococcus pyogenes serotype M28 (strain MGAS6180).